A 140-amino-acid polypeptide reads, in one-letter code: Low calcium response locus protein T (140 aa).

The polypeptide is Low calcium response locus protein T (lcrT) (Yersinia pseudotuberculosis serotype I (strain IP32953)).